Consider the following 79-residue polypeptide: MGSFSIWHWLIVLAIVVLVFGTKKLKNIGSDLGGAVKGFKDGVKDGSTSTDTPAAAPGQVAGQTAADKTTIDVEAKQKG.

The helical transmembrane segment at Met1 to Gly21 threads the bilayer. The disordered stretch occupies residues Val43–Gly79. The segment covering Thr69 to Gly79 has biased composition (basic and acidic residues).

It belongs to the TatA/E family. In terms of assembly, the Tat system comprises two distinct complexes: a TatABC complex, containing multiple copies of TatA, TatB and TatC subunits, and a separate TatA complex, containing only TatA subunits. Substrates initially bind to the TatABC complex, which probably triggers association of the separate TatA complex to form the active translocon.

It localises to the cell inner membrane. Part of the twin-arginine translocation (Tat) system that transports large folded proteins containing a characteristic twin-arginine motif in their signal peptide across membranes. TatA could form the protein-conducting channel of the Tat system. This Delftia acidovorans (strain DSM 14801 / SPH-1) protein is Sec-independent protein translocase protein TatA.